The chain runs to 794 residues: Kinesin-like protein KIN-13A (794 aa).

The Kinesin motor domain occupies 193–526; it reads KIKVVVRKRP…LRYADRVKSL (334 aa). An ATP-binding site is contributed by 282-289; that stretch reads GQTGSGKT. The tract at residues 525–699 is disordered; sequence SLSKSGNSKK…YETASRQYET (175 aa). The segment covering 569 to 579 has biased composition (basic and acidic residues); that stretch reads ETRRRVVEKDS. Composition is skewed to polar residues over residues 580 to 593 and 611 to 632; these read NSST…QPTN and EPNS…YPQE. The span at 650 to 668 shows a compositional bias: basic and acidic residues; it reads GLREEKPDRPQNWSKRDVS. Over residues 669–696 the composition is skewed to polar residues; that stretch reads SSDIPTLTNFRQNASETASRQYETASRQ. Residues 705–742 are a coiled coil; sequence ENLDALLEEEEALIAAHRKEIEDTMEIVREEMKLLAEV.

It belongs to the TRAFAC class myosin-kinesin ATPase superfamily. Kinesin family. KIN-13 subfamily. In terms of assembly, component of the active ARAC10-IRC5-KIN13A complex. Interacts (via-C-terminus) with ICR2 and ICR5 (via N-terminus). No interactions with ICR1. In terms of tissue distribution, expressed in leaves, roots, young and mature seedlings. Preferentially expressed in the secondary cell wall pits of differentiating metaxylem vessel cells (at the protein level).

It localises to the golgi apparatus. It is found in the golgi stack. Its subcellular location is the cytoplasm. The protein localises to the cytoskeleton. Its function is as follows. Internal motor kinesin involved in trichome morphogenesis. Participates in regulating the formation of Golgi-associated vesicles. Plays a central role in microtubule disassembly via the active ARAC10-ICR5 cascade, which establishes the secondary cell wall pattern in metaxylem vessel cells. Acts redundantly with KIN13B to modulate cell wall synthesis and cell expansion via the THE1 pathway. In Arabidopsis thaliana (Mouse-ear cress), this protein is Kinesin-like protein KIN-13A.